A 371-amino-acid polypeptide reads, in one-letter code: MAPKKKATTAAQKDRSKALDLAMAQIEKDFGKGAIMRLGDENRPPISAIPSGNIAINVALGIGGFPRGRVVEIYGPESSGKTTVALHAIAEAQKGGGIAAFIDAEHALDPEYAKALGVDTDALLVSQPDTGEQALEIADMLVRSGAIDMVVIDSVAALTPKAEIDGEMGDSHVGLQARLMSQALRKMTSALYQTGTTAIFINQLREKIGVMFGSPETTTGGKALKFYASVRCDIRRIQALKDGQDVVGNRTRLKIVKNKVSPPFKIAEFDILYGEGISREGSILDLGVDAGIIKKSGSWFTYEGEQLGQGKEKARDFLKSNPELAEQLDDRIMQELKVGPYAKAKDEPIADEDQPIDVVPNFDDQDVEPQN.

Position 75-82 (75-82 (GPESSGKT)) interacts with ATP. Residues 343–371 (KAKDEPIADEDQPIDVVPNFDDQDVEPQN) are disordered.

Belongs to the RecA family.

The protein localises to the cytoplasm. In terms of biological role, can catalyze the hydrolysis of ATP in the presence of single-stranded DNA, the ATP-dependent uptake of single-stranded DNA by duplex DNA, and the ATP-dependent hybridization of homologous single-stranded DNAs. It interacts with LexA causing its activation and leading to its autocatalytic cleavage. The polypeptide is Protein RecA (Corynebacterium urealyticum (strain ATCC 43042 / DSM 7109)).